The sequence spans 502 residues: Lipoyl synthase, apicoplast (502 aa).

The N-terminal stretch at 1–16 (MNFLVLFFSYSIFVLP) is a signal peptide. The [4Fe-4S] cluster site is built by cysteine 192, cysteine 197, cysteine 203, cysteine 218, cysteine 222, cysteine 225, and serine 433. In terms of domain architecture, Radical SAM core spans 204–422 (WNIGTATIML…KDVGLKMGFK (219 aa)).

The protein belongs to the radical SAM superfamily. Lipoyl synthase family. [4Fe-4S] cluster serves as cofactor.

Its subcellular location is the plastid. It localises to the apicoplast. The enzyme catalyses [[Fe-S] cluster scaffold protein carrying a second [4Fe-4S](2+) cluster] + N(6)-octanoyl-L-lysyl-[protein] + 2 oxidized [2Fe-2S]-[ferredoxin] + 2 S-adenosyl-L-methionine + 4 H(+) = [[Fe-S] cluster scaffold protein] + N(6)-[(R)-dihydrolipoyl]-L-lysyl-[protein] + 4 Fe(3+) + 2 hydrogen sulfide + 2 5'-deoxyadenosine + 2 L-methionine + 2 reduced [2Fe-2S]-[ferredoxin]. Its pathway is protein modification; protein lipoylation via endogenous pathway; protein N(6)-(lipoyl)lysine from octanoyl-[acyl-carrier-protein]: step 2/2. Catalyzes the radical-mediated insertion of two sulfur atoms into the C-6 and C-8 positions of the octanoyl moiety bound to the lipoyl domains of lipoate-dependent enzymes, thereby converting the octanoylated domains into lipoylated derivatives. The sequence is that of Lipoyl synthase, apicoplast from Plasmodium yoelii yoelii.